The sequence spans 222 residues: Probable transaldolase (222 aa).

The active-site Schiff-base intermediate with substrate is Lys-91.

The protein belongs to the transaldolase family. Type 3B subfamily.

The protein resides in the cytoplasm. It carries out the reaction D-sedoheptulose 7-phosphate + D-glyceraldehyde 3-phosphate = D-erythrose 4-phosphate + beta-D-fructose 6-phosphate. It functions in the pathway carbohydrate degradation; pentose phosphate pathway; D-glyceraldehyde 3-phosphate and beta-D-fructose 6-phosphate from D-ribose 5-phosphate and D-xylulose 5-phosphate (non-oxidative stage): step 2/3. In terms of biological role, transaldolase is important for the balance of metabolites in the pentose-phosphate pathway. This chain is Probable transaldolase, found in Chlorobium chlorochromatii (strain CaD3).